The following is a 73-amino-acid chain: EAGEECDCGTPENPCCDAATCKLRPGAQCADGLCCDQCRFMKKGTVCRVARGDWNDDTCTGQSADCPRNGLYG.

The Disintegrin domain occupies Glu1 to Gly73. 6 disulfides stabilise this stretch: Cys6-Cys21, Cys8-Cys16, Cys15-Cys38, Cys29-Cys35, Cys34-Cys59, and Cys47-Cys66. Positions Arg51 to Asp53 match the Cell attachment site motif.

It belongs to the venom metalloproteinase (M12B) family. P-II subfamily. P-IIa sub-subfamily. Monomer (disintegrin). In terms of tissue distribution, expressed by the venom gland.

It localises to the secreted. In terms of biological role, inhibits fibrinogen interaction with platelets. Acts by binding to alpha-IIb/beta-3 (ITGA2B/ITGB3) on the platelet surface and inhibits aggregation induced by ADP, thrombin, platelet-activating factor and collagen. The polypeptide is Disintegrin cerastin (Crotalus cerastes cerastes (Mojave desert sidewinder)).